Reading from the N-terminus, the 226-residue chain is NAD(P)H-quinone oxidoreductase subunit K, chloroplastic (226 aa).

Positions 43, 44, 108, and 139 each coordinate [4Fe-4S] cluster.

The protein belongs to the complex I 20 kDa subunit family. In terms of assembly, NDH is composed of at least 16 different subunits, 5 of which are encoded in the nucleus. [4Fe-4S] cluster serves as cofactor.

It is found in the plastid. It localises to the chloroplast thylakoid membrane. The enzyme catalyses a plastoquinone + NADH + (n+1) H(+)(in) = a plastoquinol + NAD(+) + n H(+)(out). It catalyses the reaction a plastoquinone + NADPH + (n+1) H(+)(in) = a plastoquinol + NADP(+) + n H(+)(out). Its function is as follows. NDH shuttles electrons from NAD(P)H:plastoquinone, via FMN and iron-sulfur (Fe-S) centers, to quinones in the photosynthetic chain and possibly in a chloroplast respiratory chain. The immediate electron acceptor for the enzyme in this species is believed to be plastoquinone. Couples the redox reaction to proton translocation, and thus conserves the redox energy in a proton gradient. The protein is NAD(P)H-quinone oxidoreductase subunit K, chloroplastic of Lupinus luteus (European yellow lupine).